The sequence spans 650 residues: Serine/threonine-protein phosphatase with EF-hands 1 (650 aa).

The IQ domain maps to Val16–Phe45. The segment at Ile124 to Ser456 is catalytic. Positions 175, 177, 204, and 236 each coordinate Mn(2+). His237 (proton donor) is an active-site residue. Position 288 (His288) interacts with Mn(2+). Residues Pro315–Asp348 form a disordered region. Over residues Glu335 to Asp348 the composition is skewed to basic and acidic residues. His404 lines the Mn(2+) pocket. 3 consecutive EF-hand domains span residues Ser484 to Leu519, Arg567 to His602, and Ile607 to Tyr642. Residues Asp497, Ser499, Ser501, Arg503, Glu508, Asp580, Asp582, Ser584, Glu591, Asp620, Asn622, Asp624, Asn626, and Glu631 each coordinate Ca(2+).

It belongs to the PPP phosphatase family. It depends on Mn(2+) as a cofactor. Mg(2+) serves as cofactor. In the embryo it is almost exclusively expressed in the peripheral nervous system, within sensory neurons of cranial and dorsal root ganglia. Otherwise found in fetal inner ear and a small group of neurons in the midbrain/pons junction.

The enzyme catalyses O-phospho-L-seryl-[protein] + H2O = L-seryl-[protein] + phosphate. The catalysed reaction is O-phospho-L-threonyl-[protein] + H2O = L-threonyl-[protein] + phosphate. With respect to regulation, activated by calcium. In terms of biological role, may have a role in the recovery or adaptation response of photoreceptors. May have a role in diverse sensory neurons and in development. This Mus musculus (Mouse) protein is Serine/threonine-protein phosphatase with EF-hands 1 (Ppef1).